The following is a 291-amino-acid chain: Ribosomal RNA small subunit methyltransferase H (291 aa).

Residues 25-27 (GGH), Asp45, Phe73, Asp88, and Gln95 each bind S-adenosyl-L-methionine.

This sequence belongs to the methyltransferase superfamily. RsmH family.

It localises to the cytoplasm. The catalysed reaction is cytidine(1402) in 16S rRNA + S-adenosyl-L-methionine = N(4)-methylcytidine(1402) in 16S rRNA + S-adenosyl-L-homocysteine + H(+). Functionally, specifically methylates the N4 position of cytidine in position 1402 (C1402) of 16S rRNA. This is Ribosomal RNA small subunit methyltransferase H from Flavobacterium psychrophilum (strain ATCC 49511 / DSM 21280 / CIP 103535 / JIP02/86).